The primary structure comprises 441 residues: tRNA (adenine(37)-N6)-methyltransferase (441 aa).

In terms of domain architecture, TsaA-like spans 30 to 168; it reads TEPVGYLESC…YIAEYDSPQN (139 aa). Residues 47 to 49, 90 to 91, Arg117, Leu127, and 148 to 151 each bind S-adenosyl-L-methionine; these read PRQ, HK, and IHGT. Residues 179–192 show a composition bias toward polar residues; sequence QNNQHTPNTVSQSD. 2 disordered regions span residues 179–231 and 264–284; these read QNNQ…EENY and SSVA…SEKG.

Belongs to the tRNA methyltransferase O family.

The enzyme catalyses N(6)-L-threonylcarbamoyladenosine(37) in tRNA + S-adenosyl-L-methionine = N(6)-methyl,N(6)-L-threonylcarbamoyladenosine(37) in tRNA + S-adenosyl-L-homocysteine + H(+). S-adenosyl-L-methionine-dependent methyltransferase responsible for the addition of the methyl group in the formation of N6-methyl-N6-threonylcarbamoyladenosine at position 37 (m(6)t(6)A37) of the tRNA anticodon loop of tRNA(Ser)(GCU). The methyl group of m(6)t(6)A37 may improve the efficiency of the tRNA decoding ability. This is tRNA (adenine(37)-N6)-methyltransferase from Homo sapiens (Human).